We begin with the raw amino-acid sequence, 458 residues long: Argininosuccinate lyase (458 aa).

The protein belongs to the lyase 1 family. Argininosuccinate lyase subfamily.

The protein resides in the cytoplasm. The catalysed reaction is 2-(N(omega)-L-arginino)succinate = fumarate + L-arginine. Its pathway is amino-acid biosynthesis; L-arginine biosynthesis; L-arginine from L-ornithine and carbamoyl phosphate: step 3/3. This is Argininosuccinate lyase from Geobacter sp. (strain M21).